Reading from the N-terminus, the 200-residue chain is Probable GTP-binding protein EngB (200 aa).

Residues 22 to 199 (NVAEVAFLGR…QDKITGYLFG (178 aa)) form the EngB-type G domain. GTP is bound by residues 30-37 (GRSNVGKS), 57-61 (GKTQL), 85-88 (DLPG), 155-158 (TKID), and 177-180 (FLSN). Serine 37 and threonine 59 together coordinate Mg(2+).

The protein belongs to the TRAFAC class TrmE-Era-EngA-EngB-Septin-like GTPase superfamily. EngB GTPase family. Requires Mg(2+) as cofactor.

Necessary for normal cell division and for the maintenance of normal septation. This chain is Probable GTP-binding protein EngB, found in Aliarcobacter butzleri (strain RM4018) (Arcobacter butzleri).